Consider the following 954-residue polypeptide: Glycine dehydrogenase (decarboxylating) (954 aa).

K699 carries the post-translational modification N6-(pyridoxal phosphate)lysine.

Belongs to the GcvP family. In terms of assembly, the glycine cleavage system is composed of four proteins: P, T, L and H. Pyridoxal 5'-phosphate serves as cofactor.

The enzyme catalyses N(6)-[(R)-lipoyl]-L-lysyl-[glycine-cleavage complex H protein] + glycine + H(+) = N(6)-[(R)-S(8)-aminomethyldihydrolipoyl]-L-lysyl-[glycine-cleavage complex H protein] + CO2. The glycine cleavage system catalyzes the degradation of glycine. The P protein binds the alpha-amino group of glycine through its pyridoxal phosphate cofactor; CO(2) is released and the remaining methylamine moiety is then transferred to the lipoamide cofactor of the H protein. The protein is Glycine dehydrogenase (decarboxylating) of Nitrobacter winogradskyi (strain ATCC 25391 / DSM 10237 / CIP 104748 / NCIMB 11846 / Nb-255).